The following is a 381-amino-acid chain: Alkanesulfonate monooxygenase (381 aa).

Belongs to the SsuD family. Homotetramer.

The catalysed reaction is an alkanesulfonate + FMNH2 + O2 = an aldehyde + FMN + sulfite + H2O + 2 H(+). Functionally, catalyzes the desulfonation of aliphatic sulfonates. The polypeptide is Alkanesulfonate monooxygenase (Escherichia coli (strain SE11)).